The primary structure comprises 264 residues: Thymidylate synthase (264 aa).

Residues R21 and 126-127 each bind dUMP; that span reads RR. C146 functions as the Nucleophile in the catalytic mechanism. Residues 166–169, N177, and 207–209 contribute to the dUMP site; these read RSAD and HLY. D169 is a (6R)-5,10-methylene-5,6,7,8-tetrahydrofolate binding site. A263 contacts (6R)-5,10-methylene-5,6,7,8-tetrahydrofolate.

This sequence belongs to the thymidylate synthase family. Bacterial-type ThyA subfamily. Homodimer.

Its subcellular location is the cytoplasm. The enzyme catalyses dUMP + (6R)-5,10-methylene-5,6,7,8-tetrahydrofolate = 7,8-dihydrofolate + dTMP. It participates in pyrimidine metabolism; dTTP biosynthesis. Catalyzes the reductive methylation of 2'-deoxyuridine-5'-monophosphate (dUMP) to 2'-deoxythymidine-5'-monophosphate (dTMP) while utilizing 5,10-methylenetetrahydrofolate (mTHF) as the methyl donor and reductant in the reaction, yielding dihydrofolate (DHF) as a by-product. This enzymatic reaction provides an intracellular de novo source of dTMP, an essential precursor for DNA biosynthesis. The protein is Thymidylate synthase of Rhodopseudomonas palustris (strain HaA2).